The primary structure comprises 250 residues: Troponin I 1 (250 aa).

Disordered stretches follow at residues 1–59 (MSQI…ERKK) and 194–250 (SVFT…ADEE). Composition is skewed to basic and acidic residues over residues 21 to 45 (DAQRKAQEREAKKAEVRKRLEEAGQ) and 206 to 221 (DKPEWSKKKEEKKEES). Residues 229 to 250 (PVEEEETAASEGEEEEEEADEE) show a composition bias toward acidic residues.

This sequence belongs to the troponin I family. As to expression, strongly expressed in body wall muscle during embryogenesis, reduces during the larval stages to adult. In late-stage larvae and adults, expression is evident in the proximal gonad of both hermaphrodites and males.

Troponin I is the inhibitory subunit of troponin, the thin filament regulatory complex which confers calcium-sensitivity to muscle actomyosin ATPase activity. This Caenorhabditis elegans protein is Troponin I 1 (tni-1).